The primary structure comprises 374 residues: Queuine tRNA-ribosyltransferase (374 aa).

Residue Asp-89 is the Proton acceptor of the active site. Substrate is bound by residues 89-93 (DSGGF), Asp-143, Gln-187, and Gly-214. The interval 245 to 251 (GVGKPED) is RNA binding. Asp-264 (nucleophile) is an active-site residue. The tract at residues 269 to 273 (TRNAR) is RNA binding; important for wobble base 34 recognition. Zn(2+) is bound by residues Cys-302, Cys-304, Cys-307, and His-333.

This sequence belongs to the queuine tRNA-ribosyltransferase family. Homodimer. Within each dimer, one monomer is responsible for RNA recognition and catalysis, while the other monomer binds to the replacement base PreQ1. The cofactor is Zn(2+).

It catalyses the reaction 7-aminomethyl-7-carbaguanine + guanosine(34) in tRNA = 7-aminomethyl-7-carbaguanosine(34) in tRNA + guanine. Its pathway is tRNA modification; tRNA-queuosine biosynthesis. Its function is as follows. Catalyzes the base-exchange of a guanine (G) residue with the queuine precursor 7-aminomethyl-7-deazaguanine (PreQ1) at position 34 (anticodon wobble position) in tRNAs with GU(N) anticodons (tRNA-Asp, -Asn, -His and -Tyr). Catalysis occurs through a double-displacement mechanism. The nucleophile active site attacks the C1' of nucleotide 34 to detach the guanine base from the RNA, forming a covalent enzyme-RNA intermediate. The proton acceptor active site deprotonates the incoming PreQ1, allowing a nucleophilic attack on the C1' of the ribose to form the product. After dissociation, two additional enzymatic reactions on the tRNA convert PreQ1 to queuine (Q), resulting in the hypermodified nucleoside queuosine (7-(((4,5-cis-dihydroxy-2-cyclopenten-1-yl)amino)methyl)-7-deazaguanosine). This Shewanella loihica (strain ATCC BAA-1088 / PV-4) protein is Queuine tRNA-ribosyltransferase.